Reading from the N-terminus, the 465-residue chain is Phosphomethylpyrimidine synthase (465 aa).

Substrate-binding positions include N80, M109, Y139, H175, 195–197 (SRG), 236–239 (DSLR), and E275. Zn(2+) is bound at residue H279. Y302 is a substrate binding site. H343 contributes to the Zn(2+) binding site. The [4Fe-4S] cluster site is built by C423, C426, and C431.

It belongs to the ThiC family. It depends on [4Fe-4S] cluster as a cofactor.

It carries out the reaction 5-amino-1-(5-phospho-beta-D-ribosyl)imidazole + S-adenosyl-L-methionine = 4-amino-2-methyl-5-(phosphooxymethyl)pyrimidine + CO + 5'-deoxyadenosine + formate + L-methionine + 3 H(+). It participates in cofactor biosynthesis; thiamine diphosphate biosynthesis. Its function is as follows. Catalyzes the synthesis of the hydroxymethylpyrimidine phosphate (HMP-P) moiety of thiamine from aminoimidazole ribotide (AIR) in a radical S-adenosyl-L-methionine (SAM)-dependent reaction. In Synechococcus sp. (strain CC9311), this protein is Phosphomethylpyrimidine synthase.